The primary structure comprises 290 residues: Elongation factor Ts (290 aa).

The tract at residues 80–83 (TDFV) is involved in Mg(2+) ion dislocation from EF-Tu.

Belongs to the EF-Ts family.

Its subcellular location is the cytoplasm. Its function is as follows. Associates with the EF-Tu.GDP complex and induces the exchange of GDP to GTP. It remains bound to the aminoacyl-tRNA.EF-Tu.GTP complex up to the GTP hydrolysis stage on the ribosome. In Neorickettsia sennetsu (strain ATCC VR-367 / Miyayama) (Ehrlichia sennetsu), this protein is Elongation factor Ts.